The sequence spans 314 residues: NAD-dependent protein lipoamidase sirtuin-4, mitochondrial (314 aa).

The transit peptide at Met1–Ser28 directs the protein to the mitochondrion. Residues Pro37–Cys314 form the Deacetylase sirtuin-type domain. Residues Gly62 to Tyr82 and Gln143 to Asp146 each bind NAD(+). Catalysis depends on His161, which acts as the Proton acceptor. Residues Cys169, Cys172, Cys220, and Cys223 each contribute to the Zn(2+) site. Residues Gly260–Ser262, Asn286–Gly288, and Cys304 contribute to the NAD(+) site.

The protein belongs to the sirtuin family. Class II subfamily. In terms of assembly, interacts with GLUD1, IDE and SLC25A5. Interacts with DLAT and PDHX. Interacts with MCCC1 (via the biotin carboxylation domain). Interacts with PCCA and PC. Requires Zn(2+) as cofactor. As to expression, detected in vascular smooth muscle and striated muscle. Detected in insulin-producing beta-cells in pancreas islets of Langerhans (at protein level). Widely expressed. Weakly expressed in leukocytes and fetal thymus.

The protein resides in the mitochondrion matrix. It catalyses the reaction N(6)-[(R)-lipoyl]-L-lysyl-[protein] + NAD(+) + H2O = 2''-O-lipoyl-ADP-D-ribose + nicotinamide + L-lysyl-[protein]. The catalysed reaction is N(6)-biotinyl-L-lysyl-[protein] + NAD(+) + H2O = 2''-O-biotinyl-ADP-D-ribose + nicotinamide + L-lysyl-[protein]. It carries out the reaction N(6)-acetyl-L-lysyl-[protein] + NAD(+) + H2O = 2''-O-acetyl-ADP-D-ribose + nicotinamide + L-lysyl-[protein]. The enzyme catalyses L-cysteinyl-[protein] + NAD(+) = S-(ADP-D-ribosyl)-L-cysteinyl-[protein] + nicotinamide + H(+). Acts as a NAD-dependent protein lipoamidase, biotinylase, deacetylase and ADP-ribosyl transferase. Catalyzes more efficiently removal of lipoyl- and biotinyl- than acetyl-lysine modifications. Inhibits the pyruvate dehydrogenase complex (PDH) activity via the enzymatic hydrolysis of the lipoamide cofactor from the E2 component, DLAT, in a phosphorylation-independent manner. Catalyzes the transfer of ADP-ribosyl groups onto target proteins, including mitochondrial GLUD1, inhibiting GLUD1 enzyme activity. Acts as a negative regulator of mitochondrial glutamine metabolism by mediating mono ADP-ribosylation of GLUD1: expressed in response to DNA damage and negatively regulates anaplerosis by inhibiting GLUD1, leading to block metabolism of glutamine into tricarboxylic acid cycle and promoting cell cycle arrest. In response to mTORC1 signal, SIRT4 expression is repressed, promoting anaplerosis and cell proliferation. Acts as a tumor suppressor. Also acts as a NAD-dependent protein deacetylase: mediates deacetylation of 'Lys-471' of MLYCD, inhibiting its activity, thereby acting as a regulator of lipid homeostasis. Does not seem to deacetylate PC. Controls fatty acid oxidation by inhibiting PPARA transcriptional activation. Impairs SIRT1-PPARA interaction probably through the regulation of NAD(+) levels. Down-regulates insulin secretion. This is NAD-dependent protein lipoamidase sirtuin-4, mitochondrial from Homo sapiens (Human).